Here is a 472-residue protein sequence, read N- to C-terminus: Glutamate--tRNA ligase (472 aa).

The short motif at 10 to 20 (PSPTGYLHVGG) is the 'HIGH' region element. Zn(2+) is bound by residues Cys99, Cys101, Cys126, and Asp128. The 'KMSKS' region motif lies at 238–242 (KLSKR). An ATP-binding site is contributed by Lys241.

This sequence belongs to the class-I aminoacyl-tRNA synthetase family. Glutamate--tRNA ligase type 1 subfamily. Monomer. Zn(2+) serves as cofactor.

It is found in the cytoplasm. It catalyses the reaction tRNA(Glu) + L-glutamate + ATP = L-glutamyl-tRNA(Glu) + AMP + diphosphate. Its function is as follows. Catalyzes the attachment of glutamate to tRNA(Glu) in a two-step reaction: glutamate is first activated by ATP to form Glu-AMP and then transferred to the acceptor end of tRNA(Glu). The protein is Glutamate--tRNA ligase of Photorhabdus laumondii subsp. laumondii (strain DSM 15139 / CIP 105565 / TT01) (Photorhabdus luminescens subsp. laumondii).